The primary structure comprises 98 residues: Cytochrome b (98 aa).

The next 3 membrane-spanning stretches (helical) occupy residues 1–18, 42–63, and 78–98; these read LLGLCLITQILTGLFLAM, WLIRNVHANGASFFFICLYLHV, and WNIGVVLLLLTMMTAFVGYVL. H48 and H62 together coordinate heme b.

This sequence belongs to the cytochrome b family. As to quaternary structure, the cytochrome bc1 complex contains 3 respiratory subunits (MT-CYB, CYC1 and UQCRFS1), 2 core proteins (UQCRC1 and UQCRC2) and probably 6 low-molecular weight proteins. The cofactor is heme b.

The protein localises to the mitochondrion inner membrane. Functionally, component of the ubiquinol-cytochrome c reductase complex (complex III or cytochrome b-c1 complex) that is part of the mitochondrial respiratory chain. The b-c1 complex mediates electron transfer from ubiquinol to cytochrome c. Contributes to the generation of a proton gradient across the mitochondrial membrane that is then used for ATP synthesis. The chain is Cytochrome b (mt-cyb) from Scaphirhynchus platorynchus (Shovelnose sturgeon).